The sequence spans 643 residues: Uromodulin (643 aa).

The signal sequence occupies residues 1–26 (MKCLFSPNFMWMAAVVTSWVIIPAAT). One can recognise an EGF-like 1 domain in the interval 32 to 66 (KSCSECHSNATCTVDGAATTCACQEGFTGDGLECV). Intrachain disulfides connect Cys34/Cys43, Cys37/Cys52, Cys54/Cys65, Cys71/Cys85, Cys79/Cys94, Cys96/Cys108, Cys114/Cys128, Cys122/Cys137, Cys139/Cys150, Cys152/Cys163, Cys157/Cys172, Cys176/Cys269, Cys197/Cys284, Cys219/Cys257, Cys225/Cys289, Cys250/Cys258, Cys299/Cys308, Cys302/Cys317, Cys319/Cys349, Cys337/Cys427, and Cys368/Cys391. Residue Asn40 is glycosylated (N-linked (GlcNAc...) asparagine). The 43-residue stretch at 67–109 (DLDECAVLGAHNCSATKSCVNTLGSYTCVCPEGFLLSSELGCE) folds into the EGF-like 2; calcium-binding domain. N-linked (GlcNAc...) asparagine glycosylation occurs at Asn78. Residues 110–151 (DVDECAEPGLSRCHALATCINGEGNYSCVCPAGYLGDGRHCE) form the EGF-like 3; calcium-binding domain. Asn134 is a glycosylation site (N-linked (GlcNAc...) asparagine). Positions 152-173 (CSPGSCGPGLDCVREGDALVCV) are beta hairpin. Positions 174 to 293 (DPCQVHRILD…CHLAYCTDPS (120 aa)) are D10C. The N-linked (GlcNAc...) asparagine glycan is linked to Asn234. Asn277 is a glycosylation site (N-linked (GlcNAc...) asparagine). The EGF-like 4 domain occupies 294-325 (SVEGTCEECRVDEDCKSDNGEWHCQCKQDFNV). N-linked (GlcNAc...) asparagine glycosylation is present at Asn324. The interval 336-431 (ECGVDDIKLS…RINFACSYPL (96 aa)) is ZP-N. The ZP domain maps to 336–587 (ECGVDDIKLS…EKCRPTCPET (252 aa)). N-linked (GlcNAc...) asparagine glycans are attached at residues Asn398 and Asn449. Residues 432-455 (DMKVSLKTSLQPMVSALNISMGGT) are flexible ZP-N/ZP-C linker; important for secretion and polymerization into filaments. The internal hydrophobic patch (IHP) stretch occupies residues 456–466 (GTFTVRMALFQ). The segment at 456-587 (GTFTVRMALF…EKCRPTCPET (132 aa)) is ZP-C. 3 cysteine pairs are disulfide-bonded: Cys508-Cys568, Cys529-Cys584, and Cys573-Cys580. N-linked (GlcNAc...) asparagine glycosylation is present at Asn515. Positions 588–591 (RFRS) are essential for cleavage by HPN. The interval 600-608 (VLNLGPITR) is external hydrophobic patch (EHP); regulates polymerization into filaments. Ser621 is lipidated: GPI-anchor amidated serine. The propeptide at 622–643 (SLGLLQVWLPLLLSATLTLMSP) is removed in mature form.

As to quaternary structure, homodimer that then polymerizes into long filaments. The filaments can additionally assemble laterally to form a sheet. The filaments consist of a zigzag-shaped backbone with laterally protruding arms which interact with bacterial adhesin fimH. Two fimH molecules can bind to a single UMOD monomer. N-glycosylated. In terms of processing, proteolytically cleaved at a conserved C-terminal proteolytic cleavage site to generate the secreted form found in urine. This cleavage is catalyzed by HPN.

The protein resides in the apical cell membrane. Its subcellular location is the basolateral cell membrane. It localises to the cell projection. The protein localises to the cilium membrane. It is found in the secreted. Its function is as follows. Functions in biogenesis and organization of the apical membrane of epithelial cells of the thick ascending limb of Henle's loop (TALH), where it promotes formation of complex filamentous gel-like structure that may play a role in the water barrier permeability. May serve as a receptor for binding and endocytosis of cytokines (IL-1, IL-2) and TNF. Facilitates neutrophil migration across renal epithelia. In terms of biological role, in the urine, may contribute to colloid osmotic pressure, retards passage of positively charged electrolytes, and inhibits formation of liquid containing supersaturated salts and subsequent formation of salt crystals. Protects against urinary tract infections by binding to type 1 fimbriated E.coli. Binds to bacterial adhesin fimH which mediates the stable formation of bacterial aggregates, prevents the binding of E.coli to uroplakins UPK1A and UPK1B which act as urothelial receptors for type I fimbriae, and allows for pathogen clearance through micturation. Also promotes aggregation of other bacteria including K.pneumoniae, P.aeruginosa and S.mitis and so may also protect against other uropathogens. This chain is Uromodulin (UMOD), found in Bos taurus (Bovine).